The following is a 121-amino-acid chain: Phosphoribosyl-ATP pyrophosphatase (121 aa).

Belongs to the PRA-PH family.

It localises to the cytoplasm. The enzyme catalyses 1-(5-phospho-beta-D-ribosyl)-ATP + H2O = 1-(5-phospho-beta-D-ribosyl)-5'-AMP + diphosphate + H(+). The protein operates within amino-acid biosynthesis; L-histidine biosynthesis; L-histidine from 5-phospho-alpha-D-ribose 1-diphosphate: step 2/9. The sequence is that of Phosphoribosyl-ATP pyrophosphatase from Burkholderia vietnamiensis (strain G4 / LMG 22486) (Burkholderia cepacia (strain R1808)).